Consider the following 624-residue polypeptide: Interleukin-1 receptor-associated kinase-like 2 (624 aa).

The Death domain occupies 13–94; the sequence is LDDLCRNIDT…RAAQIVLSWK (82 aa). The 266-residue stretch at 210 to 475 folds into the Protein kinase domain; it reads FDQSHRISEG…LPEACAETWA (266 aa). ATP is bound by residues 216–224, lysine 237, and 337–340; these read ISEGTFADI and KSAN. 2 disordered regions span residues 508 to 536 and 549 to 593; these read SLPW…NSSL and RVSS…ETSW. Polar residues predominate over residues 558–577; that stretch reads GNGTAQPSTSGRQEADSSSE.

The protein belongs to the protein kinase superfamily. TKL Ser/Thr protein kinase family. Pelle subfamily. Interacts with MYD88. IL-1 stimulation leads to the formation of a signaling complex which dissociates from the IL-1 receptor following the binding of PELI1.

In terms of biological role, binds to the IL-1 type I receptor following IL-1 engagement, triggering intracellular signaling cascades leading to transcriptional up-regulation and mRNA stabilization. The sequence is that of Interleukin-1 receptor-associated kinase-like 2 (Irak2) from Rattus norvegicus (Rat).